A 354-amino-acid polypeptide reads, in one-letter code: Putative ankyrin repeat protein L284 (354 aa).

3 ANK repeats span residues 201 to 230, 253 to 284, and 286 to 314; these read ILDD…LSND, SRYP…NPIV, and LHKA…DIDI.

The protein is Putative ankyrin repeat protein L284 of Acanthamoeba polyphaga (Amoeba).